A 234-amino-acid chain; its full sequence is 2-amino-5-formylamino-6-ribosylaminopyrimidin-4(3H)-one 5'-monophosphate deformylase (234 aa).

The Fe cation site is built by glutamate 30, histidine 32, aspartate 41, and histidine 111.

The protein belongs to the creatininase superfamily. FAPy deformylase family. In terms of assembly, homodimer. It depends on Fe(2+) as a cofactor. Zn(2+) serves as cofactor.

The catalysed reaction is 2-amino-5-formylamino-6-(5-phospho-D-ribosylamino)pyrimidin-4(3H)-one + H2O = 2,5-diamino-6-(1-D-ribosylamino)pyrimidin-4(3H)-one 5'-phosphate + formate + H(+). It functions in the pathway cofactor biosynthesis; coenzyme F420 biosynthesis. It participates in cofactor biosynthesis; riboflavin biosynthesis. Its function is as follows. Catalyzes the hydrolysis of the formamide of 2-amino-5-formylamino-6-ribosylamino-4(3H)-pyrimidinone 5'-monophosphate (FAPy) to form 2,5-diamino-6-ribosylamino-4(3H)-pyrimidinone 5'-phosphate (APy). This is 2-amino-5-formylamino-6-ribosylaminopyrimidin-4(3H)-one 5'-monophosphate deformylase from Methanothermobacter thermautotrophicus (strain ATCC 29096 / DSM 1053 / JCM 10044 / NBRC 100330 / Delta H) (Methanobacterium thermoautotrophicum).